We begin with the raw amino-acid sequence, 142 residues long: Large ribosomal subunit protein uL11 (142 aa).

The protein belongs to the universal ribosomal protein uL11 family. In terms of assembly, part of the ribosomal stalk of the 50S ribosomal subunit. Interacts with L10 and the large rRNA to form the base of the stalk. L10 forms an elongated spine to which L12 dimers bind in a sequential fashion forming a multimeric L10(L12)X complex. One or more lysine residues are methylated.

Forms part of the ribosomal stalk which helps the ribosome interact with GTP-bound translation factors. The polypeptide is Large ribosomal subunit protein uL11 (Bradyrhizobium sp. (strain BTAi1 / ATCC BAA-1182)).